The following is a 338-amino-acid chain: tRNA N6-adenosine threonylcarbamoyltransferase (338 aa).

Fe cation is bound by residues histidine 111 and histidine 115. Residues 134 to 138 (LVSGG), aspartate 167, glycine 180, and asparagine 272 contribute to the substrate site. Fe cation is bound at residue aspartate 300.

The protein belongs to the KAE1 / TsaD family. Fe(2+) serves as cofactor.

Its subcellular location is the cytoplasm. The enzyme catalyses L-threonylcarbamoyladenylate + adenosine(37) in tRNA = N(6)-L-threonylcarbamoyladenosine(37) in tRNA + AMP + H(+). In terms of biological role, required for the formation of a threonylcarbamoyl group on adenosine at position 37 (t(6)A37) in tRNAs that read codons beginning with adenine. Is involved in the transfer of the threonylcarbamoyl moiety of threonylcarbamoyl-AMP (TC-AMP) to the N6 group of A37, together with TsaE and TsaB. TsaD likely plays a direct catalytic role in this reaction. This chain is tRNA N6-adenosine threonylcarbamoyltransferase, found in Nitrosomonas eutropha (strain DSM 101675 / C91 / Nm57).